A 788-amino-acid polypeptide reads, in one-letter code: Bifunctional purine biosynthetic protein ADE1 (788 aa).

Positions 1–429 (MSLRILLVGN…NRKDIAYKAF (429 aa)) are GARS. Positions 114 to 323 (KDFMKKHNIP…LAEVMLACVE (210 aa)) constitute an ATP-grasp domain. An ATP-binding site is contributed by 140-201 (VKKVGHRVVI…EEFLEGDELS (62 aa)). 2 residues coordinate Mg(2+): glutamate 291 and asparagine 293. An AIRS region spans residues 439-752 (ITYAQAGVSI…VVKQEKVAEV (314 aa)).

This sequence in the N-terminal section; belongs to the GARS family. In the C-terminal section; belongs to the AIR synthase family. Mg(2+) is required as a cofactor. Requires Mn(2+) as cofactor.

It is found in the cytoplasm. Its subcellular location is the cytosol. It carries out the reaction 5-phospho-beta-D-ribosylamine + glycine + ATP = N(1)-(5-phospho-beta-D-ribosyl)glycinamide + ADP + phosphate + H(+). The enzyme catalyses 2-formamido-N(1)-(5-O-phospho-beta-D-ribosyl)acetamidine + ATP = 5-amino-1-(5-phospho-beta-D-ribosyl)imidazole + ADP + phosphate + H(+). It functions in the pathway purine metabolism; IMP biosynthesis via de novo pathway; 5-amino-1-(5-phospho-D-ribosyl)imidazole from N(2)-formyl-N(1)-(5-phospho-D-ribosyl)glycinamide: step 2/2. It participates in purine metabolism; IMP biosynthesis via de novo pathway; N(1)-(5-phospho-D-ribosyl)glycinamide from 5-phospho-alpha-D-ribose 1-diphosphate: step 2/2. Its function is as follows. Catalyzes the second and fifth step in the 'de novo' purine biosynthesis pathway; contains phosphoribosylamine--glycine ligase (GARS) and phosphoribosylformylglycinamidine cyclo-ligase (AIRS) activities. The polypeptide is Bifunctional purine biosynthetic protein ADE1 (Yarrowia lipolytica (strain CLIB 122 / E 150) (Yeast)).